A 946-amino-acid polypeptide reads, in one-letter code: Bifunctional glutamine synthetase adenylyltransferase/adenylyl-removing enzyme (946 aa).

The interval 1 to 440 (MKPLSSPLQQ…VFNELIGDDE (440 aa)) is adenylyl removase. An adenylyl transferase region spans residues 449–946 (SEQWRELWQD…ASWQKWLVEE (498 aa)).

The protein belongs to the GlnE family. Mg(2+) is required as a cofactor.

The enzyme catalyses [glutamine synthetase]-O(4)-(5'-adenylyl)-L-tyrosine + phosphate = [glutamine synthetase]-L-tyrosine + ADP. The catalysed reaction is [glutamine synthetase]-L-tyrosine + ATP = [glutamine synthetase]-O(4)-(5'-adenylyl)-L-tyrosine + diphosphate. Functionally, involved in the regulation of glutamine synthetase GlnA, a key enzyme in the process to assimilate ammonia. When cellular nitrogen levels are high, the C-terminal adenylyl transferase (AT) inactivates GlnA by covalent transfer of an adenylyl group from ATP to specific tyrosine residue of GlnA, thus reducing its activity. Conversely, when nitrogen levels are low, the N-terminal adenylyl removase (AR) activates GlnA by removing the adenylyl group by phosphorolysis, increasing its activity. The regulatory region of GlnE binds the signal transduction protein PII (GlnB) which indicates the nitrogen status of the cell. The chain is Bifunctional glutamine synthetase adenylyltransferase/adenylyl-removing enzyme from Shigella flexneri.